Here is a 307-residue protein sequence, read N- to C-terminus: Methionyl-tRNA formyltransferase (307 aa).

A (6S)-5,6,7,8-tetrahydrofolate-binding site is contributed by 108-111 (SLLP).

It belongs to the Fmt family.

The enzyme catalyses L-methionyl-tRNA(fMet) + (6R)-10-formyltetrahydrofolate = N-formyl-L-methionyl-tRNA(fMet) + (6S)-5,6,7,8-tetrahydrofolate + H(+). In terms of biological role, attaches a formyl group to the free amino group of methionyl-tRNA(fMet). The formyl group appears to play a dual role in the initiator identity of N-formylmethionyl-tRNA by promoting its recognition by IF2 and preventing the misappropriation of this tRNA by the elongation apparatus. The polypeptide is Methionyl-tRNA formyltransferase (Renibacterium salmoninarum (strain ATCC 33209 / DSM 20767 / JCM 11484 / NBRC 15589 / NCIMB 2235)).